The chain runs to 389 residues: MSNDRNAQELLKWGLANSGSTGVASFASQSVEQISADIEAGRRPDLADPNLYNAIMGKSEAQMMAEELSVAIDTSRTLPDRMTALDNFEMLIEQIDNANNMTSMKMWSPIISLLSAPEAEIQTAAAWIIGTAVQNNDKAQMAVLDFHPVAALLDLLHSHVDEVRAKAMYALSGLLKHNPAAMHQFDQLDGWNMLNMALVDPNLGLRRKTAFLINALLLQDPNSLDSQPASTSTATAIAPVSFTPPTPTAPPAPLERGPETLRTSIPHPNVARALVQSNIINTLISSLLPAHTLPDTLSPPPTGANGDSDARLDLDFAEKSAAAILTFTTKLPPSPSHPLDPTTISLFKALLVQLQAKPLDSSDPASTRWAELGIHAHDFDQFKHKIHAL.

ARM repeat units lie at residues 95–134 (IDNA…TAVQ), 137–176 (DKAQ…GLLK), and 179–218 (PAAM…ALLL). Residues 223 to 255 (SLDSQPASTSTATAIAPVSFTPPTPTAPPAPLE) are disordered. A compositionally biased stretch (pro residues) spans 242–253 (FTPPTPTAPPAP). The stretch at 268 to 310 (PNVARALVQSNIINTLISSLLPAHTLPDTLSPPPTGANGDSDA) is one ARM 4 repeat.

It belongs to the FES1 family.

Its subcellular location is the cytoplasm. Functionally, functions as a nucleotide exchange factor (NEF) for Hsp70 chaperones which accelerates the release of ADP. Required for fully efficient Hsp70-mediated folding of proteins. The protein is Hsp70 nucleotide exchange factor FES1 (FES1) of Mycosarcoma maydis (Corn smut fungus).